The chain runs to 428 residues: Serine hydroxymethyltransferase (428 aa).

(6S)-5,6,7,8-tetrahydrofolate-binding positions include Leu-127 and 131–133 (GHL). At Lys-236 the chain carries N6-(pyridoxal phosphate)lysine.

Belongs to the SHMT family. Homodimer. Pyridoxal 5'-phosphate serves as cofactor.

The protein resides in the cytoplasm. The enzyme catalyses (6R)-5,10-methylene-5,6,7,8-tetrahydrofolate + glycine + H2O = (6S)-5,6,7,8-tetrahydrofolate + L-serine. Its pathway is one-carbon metabolism; tetrahydrofolate interconversion. It functions in the pathway amino-acid biosynthesis; glycine biosynthesis; glycine from L-serine: step 1/1. Its function is as follows. Catalyzes the reversible interconversion of serine and glycine with tetrahydrofolate (THF) serving as the one-carbon carrier. This reaction serves as the major source of one-carbon groups required for the biosynthesis of purines, thymidylate, methionine, and other important biomolecules. Also exhibits THF-independent aldolase activity toward beta-hydroxyamino acids, producing glycine and aldehydes, via a retro-aldol mechanism. This chain is Serine hydroxymethyltransferase, found in Tropheryma whipplei (strain TW08/27) (Whipple's bacillus).